Reading from the N-terminus, the 585-residue chain is Ras-specific guanine nucleotide-releasing factor RalGPS1 (585 aa).

One can recognise a Ras-GEF domain in the interval 50–289 (TPEEFASQIT…YKLSLRIEPG (240 aa)). 2 disordered regions span residues 289 to 342 (GSSS…KSHS) and 378 to 410 (RSPRRGLTHTSSTAITNGLSLGSSESSEFSEEM). Residues 303–312 (AGPSAGSSSA) are compositionally biased toward low complexity. The short motif at 330–333 (PTPP) is the PXXP element. Polar residues predominate over residues 385–396 (THTSSTAITNGL). The 113-residue stretch at 459-571 (VPTMEGPLRR…WHKHLDDACK (113 aa)) folds into the PH domain. The tract at residues 461 to 585 (TMEGPLRRKT…QVPANLMSFE (125 aa)) is required for stimulation of nucleotide exchange by RALA.

In terms of assembly, interacts with the SH3 domains of GRB2, NCK1, PLCG1 and SRC.

The protein resides in the cytoplasm. It localises to the cell membrane. Guanine nucleotide exchange factor for the small GTPase RALA. May be involved in cytoskeleton organization. The protein is Ras-specific guanine nucleotide-releasing factor RalGPS1 (Ralgps1) of Mus musculus (Mouse).